The following is a 446-amino-acid chain: DDB1- and CUL4-associated factor 12 (446 aa).

Basic residues predominate over residues 1-12 (MTRRAVSRKRRA). Residues 1–33 (MTRRAVSRKRRAAPGTGPGEQSDWDHSAHKRKR) are disordered. WD repeat units lie at residues 132–173 (SHQS…PVCV), 177–215 (GHNDWIFSIAWISDTMAVSGSRDGSMALWEMTEEILSKS), 245–284 (PVNCKVRALAFNSKNKELGAVSLDGFFHLWKAELTLAKLL), and 333–370 (EQGSGIRSVSFYEHIVTVGTGQGALLFYDIRAQRFLED).

Belongs to the WD repeat DCAF12 family. As to quaternary structure, component of the DCX(DCAF12) E3 ubiquitin ligase complex, at least composed of cul4 (cul4a or cul4b), ddb1, dcaf12 and rbx1.

The protein localises to the cytoplasm. Its subcellular location is the cytoskeleton. The protein resides in the microtubule organizing center. It is found in the centrosome. It localises to the nucleus. It functions in the pathway protein modification; protein ubiquitination. In terms of biological role, substrate-recognition component of a DCX (DDB1-CUL4-X-box) E3 ubiquitin-protein ligase complex of the DesCEND (destruction via C-end degrons) pathway, which recognizes a C-degron located at the extreme C terminus of target proteins, leading to their ubiquitination and degradation. The C-degron recognized by the DesCEND pathway is usually a motif of less than ten residues and can be present in full-length proteins, truncated proteins or proteolytically cleaved forms. The DCX(DCAF12) complex specifically recognizes proteins with a diglutamate (Glu-Glu) at the C-terminus leading to their ubiquitination and degradation. Also directly recognizes the C-terminal glutamate-leucine (Glu-Leu) degron as an alternative degron in proteins leading to their ubiquitination and degradation. This is DDB1- and CUL4-associated factor 12 from Xenopus tropicalis (Western clawed frog).